A 206-amino-acid chain; its full sequence is Alpha-1-acid glycoprotein 3 (206 aa).

A signal peptide spans methionine 1–alanine 18. N-linked (GlcNAc...) asparagine glycosylation is found at asparagine 33, asparagine 75, and asparagine 103. Cysteine 90 and cysteine 183 are disulfide-bonded. The tract at residues glutamate 187–alanine 206 is disordered.

It belongs to the calycin superfamily. Lipocalin family.

It localises to the secreted. Functions as a transport protein in the blood stream. Binds various ligands in the interior of its beta-barrel domain. Appears to function in modulating the activity of the immune system during the acute-phase reaction. This is Alpha-1-acid glycoprotein 3 (Orm3) from Mus musculus (Mouse).